We begin with the raw amino-acid sequence, 550 residues long: Transcription factor p65 (550 aa).

Residue Met-1 is modified to N-acetylmethionine. An RHD domain is found at 16–190 (ASGPYVEIIE…HPIFDNRAPN (175 aa)). Residue Lys-37 forms a Glycyl lysine isopeptide (Lys-Gly) (interchain with G-Cter in SUMO3) linkage. Cys-38 is modified (cysteine persulfide; alternate). The residue at position 38 (Cys-38) is an S-nitrosocysteine; alternate. An N6-acetyllysine mark is found at Lys-122, Lys-123, Lys-218, and Lys-221. Glycyl lysine isopeptide (Lys-Gly) (interchain with G-Cter in SUMO3); alternate cross-links involve residues Lys-122 and Lys-123. Thr-254 bears the Phosphothreonine mark. Residues Ser-276 and Ser-281 each carry the phosphoserine modification. A Nuclear localization signal motif is present at residues 301–304 (KRKR). Lys-310 is subject to N6-acetyllysine; alternate. Lys-310 carries the N6-methyllysine modification. The residue at position 311 (Ser-311) is a Phosphoserine. 2 transcriptional activation domain regions span residues 342–388 (PKPA…APVL) and 414–476 (PGPP…EFQQ). Thr-434 is modified (phosphothreonine). Residue Ser-468 is modified to Phosphoserine. A Phosphothreonine modification is found at Thr-505. A transcriptional activation domain 2 region spans residues 520–550 (TSGLPNGLSGDEDFSSIADMDFSALLSQISS). The residue at position 535 (Ser-535) is a Phosphoserine. The 9aaTAD signature appears at 535 to 543 (SIADMDFSA).

Component of the NF-kappa-B p65-p50 complex. Component of the NF-kappa-B p65-c-Rel complex. Homodimer; component of the NF-kappa-B p65-p65 complex. Component of the NF-kappa-B p65-p52 complex. May interact with ETHE1. Binds TLE5 and TLE1. Interacts with TP53BP2. Binds to and is phosphorylated by the activated form of either RPS6KA4 or RPS6KA5. Interacts with ING4 and this interaction may be indirect. Interacts with CARM1, USP48 and UNC5CL. Interacts with IRAK1BP1. Interacts with NFKBID. Interacts with NFKBIA. Interacts with GSK3B. Interacts with NFKBIB. Interacts with NFKBIE. Interacts with NFKBIZ. Interacts with EHMT1 (via ANK repeats). Part of a 70-90 kDa complex at least consisting of CHUK, IKBKB, NFKBIA, RELA, ELP1 and MAP3K14. Interacts with HDAC3; HDAC3 mediates the deacetylation of RELA. Interacts with HDAC1; the interaction requires non-phosphorylated RELA. Interacts with CBP; the interaction requires phosphorylated RELA. Interacts (phosphorylated at 'Thr-254') with PIN1; the interaction inhibits p65 binding to NFKBIA. Interacts with SOCS1. Interacts with UXT. Interacts with MTDH and PHF11. Interacts with ARRB2. Interacts with NFKBIA (when phosphorylated), the interaction is direct; phosphorylated NFKBIA is part of a SCF(BTRC)-like complex lacking CUL1. Interacts with RNF25. Interacts (via C-terminus) with DDX1. Interacts with UFL1 and COMMD1. Interacts with BRMS1; this promotes deacetylation of 'Lys-310'. Interacts with NOTCH2. Directly interacts with MEN1; this interaction represses NFKB-mediated transactivation. Interacts with AKIP1, which promotes the phosphorylation and nuclear retention of RELA. Interacts (via the RHD) with GFI1; the interaction, after bacterial lipopolysaccharide (LPS) stimulation, inhibits the transcriptional activity by interfering with the DNA-binding activity to target gene promoter DNA. Interacts (when acetylated at Lys-310) with BRD4; leading to activation of the NF-kappa-B pathway. Interacts with MEFV. Interacts with CLOCK. Interacts (via N-terminus) with CPEN1; this interaction induces proteolytic cleavage of p65/RELA subunit and inhibition of NF-kappa-B transcriptional activity. Interacts with FOXP3. Interacts with CDK5RAP3; stimulates the interaction of RELA with HDAC1, HDAC2 and HDAC3 thereby inhibiting NF-kappa-B transcriptional activity. Interacts with DHX9; this interaction is direct and activates NF-kappa-B-mediated transcription. Interacts with LRRC25. Interacts with TBX21. Interacts with KAT2A. Interacts with ZBTB7A; involved in the control by RELA of the accessibility of target gene promoters. Directly interacts with DDX3X; this interaction may trap RELA in the cytoplasm, impairing nuclear relocalization upon TNF activating signals. Interacts with PHF2. Interacts with MKRN2; the interaction leads to its polyubiquitination and proteasome-dependent degradation. Interacts with ECSIT. Interacts with RAB28; the interaction contributes to RELA transport from cytoplasm to nucleus. In terms of processing, ubiquitinated by RNF182, leading to its proteasomal degradation. Degradation is required for termination of NF-kappa-B response. Polyubiquitinated via 'Lys-29'-linked ubiquitin; leading to lysosomal degradation. Post-translationally, monomethylated at Lys-310 by SETD6. Monomethylation at Lys-310 is recognized by the ANK repeats of EHMT1 and promotes the formation of repressed chromatin at target genes, leading to down-regulation of NF-kappa-B transcription factor activity. Phosphorylation at Ser-311 disrupts the interaction with EHMT1 without preventing monomethylation at Lys-310 and relieves the repression of target genes. Phosphorylation at Ser-311 disrupts the interaction with EHMT1 and promotes transcription factor activity. Phosphorylation on Ser-535 stimulates acetylation on Lys-310 and interaction with CBP; the phosphorylated and acetylated forms show enhanced transcriptional activity. Phosphorylation at Ser-276 by RPS6KA4 and RPS6KA5 promotes its transactivation and transcriptional activities. In terms of processing, phosphorylation at Ser-75 by herpes simplex virus 1/HHV-1 inhibits NF-kappa-B activation. Post-translationally, reversibly acetylated; the acetylation seems to be mediated by CBP, the deacetylation by HDAC3 and SIRT2. Acetylation at Lys-122 enhances DNA binding and impairs association with NFKBIA. Acetylation at Lys-310 is required for full transcriptional activity in the absence of effects on DNA binding and NFKBIA association. Acetylation at Lys-310 promotes interaction with BRD4. Acetylation can also lower DNA-binding and results in nuclear export. Interaction with BRMS1 promotes deacetylation of Lys-310. Lys-310 is deacetylated by SIRT2. S-nitrosylation of Cys-38 inactivates the enzyme activity. In terms of processing, sulfhydration at Cys-38 mediates the anti-apoptotic activity by promoting the interaction with RPS3 and activating the transcription factor activity. Post-translationally, sumoylation by PIAS3 negatively regulates DNA-bound activated NF-kappa-B. Proteolytically cleaved within a conserved N-terminus region required for base-specific contact with DNA in a CPEN1-mediated manner, and hence inhibits NF-kappa-B transcriptional activity.

Its subcellular location is the nucleus. It is found in the cytoplasm. In terms of biological role, NF-kappa-B is a pleiotropic transcription factor present in almost all cell types and is the endpoint of a series of signal transduction events that are initiated by a vast array of stimuli related to many biological processes such as inflammation, immunity, differentiation, cell growth, tumorigenesis and apoptosis. NF-kappa-B is a homo- or heterodimeric complex formed by the Rel-like domain-containing proteins RELA/p65, RELB, NFKB1/p105, NFKB1/p50, REL and NFKB2/p52. The heterodimeric RELA-NFKB1 complex appears to be most abundant one. The dimers bind at kappa-B sites in the DNA of their target genes and the individual dimers have distinct preferences for different kappa-B sites that they can bind with distinguishable affinity and specificity. Different dimer combinations act as transcriptional activators or repressors, respectively. The NF-kappa-B heterodimeric RELA-NFKB1 and RELA-REL complexes, for instance, function as transcriptional activators. NF-kappa-B is controlled by various mechanisms of post-translational modification and subcellular compartmentalization as well as by interactions with other cofactors or corepressors. NF-kappa-B complexes are held in the cytoplasm in an inactive state complexed with members of the NF-kappa-B inhibitor (I-kappa-B) family. In a conventional activation pathway, I-kappa-B is phosphorylated by I-kappa-B kinases (IKKs) in response to different activators, subsequently degraded thus liberating the active NF-kappa-B complex which translocates to the nucleus. The inhibitory effect of I-kappa-B on NF-kappa-B through retention in the cytoplasm is exerted primarily through the interaction with RELA. RELA shows a weak DNA-binding site which could contribute directly to DNA binding in the NF-kappa-B complex. Besides its activity as a direct transcriptional activator, it is also able to modulate promoters accessibility to transcription factors and thereby indirectly regulate gene expression. Associates with chromatin at the NF-kappa-B promoter region via association with DDX1. Essential for cytokine gene expression in T-cells. The NF-kappa-B homodimeric RELA-RELA complex appears to be involved in invasin-mediated activation of IL-8 expression. Key transcription factor regulating the IFN response during SARS-CoV-2 infection. The chain is Transcription factor p65 from Rattus norvegicus (Rat).